A 78-amino-acid chain; its full sequence is Antimicrobial peptide marcin-18 (78 aa).

A signal peptide spans 1–23 (MQFKKQLMVIFLAYFLVVNESEA). At R41 the chain carries Arginine amide. A propeptide spanning residues 42–78 (RKNQRSRSIMKRDLENLFDPYQRNLELDRLLKQLPNY) is cleaved from the precursor.

Belongs to the non-disulfide-bridged peptide (NDBP) superfamily. Medium-length antimicrobial peptide (group 3) family. As to expression, expressed by the venom gland.

The protein resides in the secreted. It is found in the target cell membrane. Functionally, antimicrobial peptide with potent activity against bacteria. Acts by fastly disrupting the bacterial membrane. Shows activity against Gram-positive bacteria S.aureus (MIC=1.5-2.9 uM) and S.epidermidis (MIC=2.9 uM), M.luteus (MIC=23.4 uM), B.thuringiensis (MIC=2.9 uM), B.subtilis (MIC=2.9 uM) and Gram-negative bacteria E.coli (MIC=5.9-11.7 uM) and P.aeruginosa (MIC=5.9 uM), as well as against penicillin (MIC=2.9 uM) and methicillin (MIC=1.5-2.9 uM) resistant bacteria. Antibiotic activity is not affected by major negatively charged components of the prokaryotic cell wall (e.g. lipopolysaccharides and lipoteichoic acid). In vivo, in a mouse model of lethal peritonitis, shows potent antibiotic activity without cytotoxicity, improving the survival rate. This chain is Antimicrobial peptide marcin-18, found in Olivierus martensii (Manchurian scorpion).